Consider the following 240-residue polypeptide: BLOC-1-related complex subunit 8 homolog (240 aa).

Disordered stretches follow at residues Met-1 to Gly-33 and Lys-163 to Asn-240. Low complexity-rich tracts occupy residues Ser-7 to Ser-26 and Lys-163 to Gln-179. Over residues Thr-180–Ser-190 the composition is skewed to polar residues. The segment covering Asp-196–Asn-205 has biased composition (low complexity). Residues Glu-208–Asn-240 are compositionally biased toward basic and acidic residues. A coiled-coil region spans residues Glu-211–Ile-239.

This sequence belongs to the BORCS8 family.

Its subcellular location is the lysosome membrane. In terms of biological role, may participate in the coupling of lysosomes to microtubule plus-end-directed kinesin motor. The chain is BLOC-1-related complex subunit 8 homolog from Dictyostelium discoideum (Social amoeba).